The primary structure comprises 231 residues: Ribosomal RNA large subunit methyltransferase E (231 aa).

Positions 76, 78, 99, 115, and 139 each coordinate S-adenosyl-L-methionine. The active-site Proton acceptor is K179.

It belongs to the class I-like SAM-binding methyltransferase superfamily. RNA methyltransferase RlmE family.

Its subcellular location is the cytoplasm. The enzyme catalyses uridine(2552) in 23S rRNA + S-adenosyl-L-methionine = 2'-O-methyluridine(2552) in 23S rRNA + S-adenosyl-L-homocysteine + H(+). Specifically methylates the uridine in position 2552 of 23S rRNA at the 2'-O position of the ribose in the fully assembled 50S ribosomal subunit. The protein is Ribosomal RNA large subunit methyltransferase E of Bradyrhizobium sp. (strain ORS 278).